Reading from the N-terminus, the 306-residue chain is Ribosomal protein L11 methyltransferase (306 aa).

Positions 154, 179, 201, and 242 each coordinate S-adenosyl-L-methionine.

Belongs to the methyltransferase superfamily. PrmA family.

It is found in the cytoplasm. The catalysed reaction is L-lysyl-[protein] + 3 S-adenosyl-L-methionine = N(6),N(6),N(6)-trimethyl-L-lysyl-[protein] + 3 S-adenosyl-L-homocysteine + 3 H(+). Methylates ribosomal protein L11. This is Ribosomal protein L11 methyltransferase from Stenotrophomonas maltophilia (strain K279a).